We begin with the raw amino-acid sequence, 241 residues long: Transcription initiation factor TFIID subunit 14 (241 aa).

In terms of domain architecture, YEATS spans M1–T137. The segment at P141–K169 is disordered. A compositionally biased stretch (basic and acidic residues) spans E149 to S159.

The protein belongs to the TAF14 family. In terms of assembly, component of the fcp1/TFIIF/polII complex via interaction of tfg3 with both tfg1/TFIIF-alpha and tfg2/TFIIF-beta subunits. Component of the SWI/SNF global transcription activator complex composed of at least arp9, arp42, snf5, snf22, snf30, sbf59, sol1, ssr1, ssr2, ssr3, ssr4 and tfg3. Also interacts with the TATA-binding protein (TBP). Component of the mst2 complex composed of at least eaf6, mst2, nto1, pdp3, ptf1, ptf2 and tfg3.

It localises to the nucleus. The protein resides in the nucleoplasm. In terms of biological role, functions as a component of the DNA-binding general transcription factor complex TFIID, and the RNA polymerase II associated general transcription factor complex TFIIF. Binding of TFIID to a promoter (with or without TATA element) is the initial step in preinitiation complex (PIC) formation. TFIID plays a key role in the regulation of gene expression by RNA polymerase II through different activities such as transcription activator interaction, core promoter recognition and selectivity, TFIIA and TFIIB interaction, facilitation of DNA opening and initiation of transcription. TFIIF is essential for the initiation of transcription by RNA polymerase II. TFIIF functions include the recruitment of RNA polymerase II to the promoter bound DNA-TBP-TFIIB complex, decreasing the affinity of RNA polymerase II for non-specific DNA, allowing for the subsequent recruitment of TFIIE and TFIIH, and facilitating RNA polymerase II elongation. The TAF14 subunit has stimulatory activity. Component of the SWI/SNF complex, an ATP-dependent chromatin remodeling complex, required for the positive and negative regulation of gene expression of a large number of genes. It changes chromatin structure by altering DNA-histone contacts within a nucleosome, leading eventually to a change in nucleosome position, thus facilitating or repressing binding of gene-specific transcription factors. Component of the mst2 complex which is a highly specific H3 lysine 14 (H3K14) acetyltransferase that functions together with gcn5 to regulate global levels of H3K14 acetylation (H3K14ac), critical for DNA damage checkpoint activation. This chain is Transcription initiation factor TFIID subunit 14 (tfg3), found in Schizosaccharomyces pombe (strain 972 / ATCC 24843) (Fission yeast).